Consider the following 147-residue polypeptide: Nucleoside diphosphate kinase (147 aa).

Residues Lys-9, Phe-57, Arg-85, Thr-91, Arg-102, and Asn-112 each coordinate ATP. The active-site Pros-phosphohistidine intermediate is His-115.

It belongs to the NDK family. In terms of assembly, homotetramer. Requires Mg(2+) as cofactor.

The protein resides in the cytoplasm. The catalysed reaction is a 2'-deoxyribonucleoside 5'-diphosphate + ATP = a 2'-deoxyribonucleoside 5'-triphosphate + ADP. It catalyses the reaction a ribonucleoside 5'-diphosphate + ATP = a ribonucleoside 5'-triphosphate + ADP. In terms of biological role, major role in the synthesis of nucleoside triphosphates other than ATP. The ATP gamma phosphate is transferred to the NDP beta phosphate via a ping-pong mechanism, using a phosphorylated active-site intermediate. This is Nucleoside diphosphate kinase from Listeria innocua serovar 6a (strain ATCC BAA-680 / CLIP 11262).